The primary structure comprises 92 residues: UPF0473 protein BCE33L4129 (92 aa).

This sequence belongs to the UPF0473 family.

The protein is UPF0473 protein BCE33L4129 of Bacillus cereus (strain ZK / E33L).